The following is a 169-amino-acid chain: Transcription antitermination protein NusB (169 aa).

Over residues 1–19 (MAEMKKTIDNKPAPKGEKK) the composition is skewed to basic and acidic residues. Residues 1–22 (MAEMKKTIDNKPAPKGEKKANR) are disordered.

The protein belongs to the NusB family.

In terms of biological role, involved in transcription antitermination. Required for transcription of ribosomal RNA (rRNA) genes. Binds specifically to the boxA antiterminator sequence of the ribosomal RNA (rrn) operons. This chain is Transcription antitermination protein NusB, found in Rhodopseudomonas palustris (strain BisB18).